A 1107-amino-acid polypeptide reads, in one-letter code: uncharacterized protein (1107 aa).

Over residues 180 to 204 (SGNGSSGGNNNNNNNSLNNSNNSIG) the composition is skewed to low complexity. Disordered regions lie at residues 180 to 251 (SGNG…SGNN) and 501 to 530 (LMNINNNNNNNNSNNNNNNNDQNKDKDNQM). Residues 205–215 (SSGGNGGGGSN) show a composition bias toward gly residues. The segment covering 219 to 237 (PSMSPQFTSISKTNSPQII) has biased composition (polar residues). Composition is skewed to low complexity over residues 238–251 (NTSSNNLNSSSGNN) and 501–521 (LMNINNNNNNNNSNNNNNNND). 2 coiled-coil regions span residues 789 to 816 (KKDIIEHLTQRHNQYQSNINEDEQIYRE) and 940 to 1012 (NIDH…NMLK).

This is an uncharacterized protein from Dictyostelium discoideum (Social amoeba).